Consider the following 211-residue polypeptide: MRTFPGGVYALTRETPDTERLLAEVEAALAGGVAAVQYRDKSGDVAQRHAQASELAALCRRFGVPLIVNDDLRLADLAGADGVHLGRDDASIREARIILGPAKFVGASCYQSLDLARAAQTAGADYVAFGSFYPSPTKPAAARADVALLARASRHIALPVVAIGGITAANAAPLIDAGADSLAVLSALFDAPDVRRAAAELNRLFAAEPEE.

4-amino-2-methyl-5-(diphosphooxymethyl)pyrimidine-binding positions include 37–41 (QYRDK) and Asn-69. Asp-70 and Asp-89 together coordinate Mg(2+). Ser-108 contributes to the 4-amino-2-methyl-5-(diphosphooxymethyl)pyrimidine binding site. Residue 135-137 (SPT) participates in 2-[(2R,5Z)-2-carboxy-4-methylthiazol-5(2H)-ylidene]ethyl phosphate binding. Lys-138 lines the 4-amino-2-methyl-5-(diphosphooxymethyl)pyrimidine pocket. 2-[(2R,5Z)-2-carboxy-4-methylthiazol-5(2H)-ylidene]ethyl phosphate-binding positions include Gly-165 and 185-186 (LS).

It belongs to the thiamine-phosphate synthase family. Mg(2+) serves as cofactor.

It catalyses the reaction 2-[(2R,5Z)-2-carboxy-4-methylthiazol-5(2H)-ylidene]ethyl phosphate + 4-amino-2-methyl-5-(diphosphooxymethyl)pyrimidine + 2 H(+) = thiamine phosphate + CO2 + diphosphate. The catalysed reaction is 2-(2-carboxy-4-methylthiazol-5-yl)ethyl phosphate + 4-amino-2-methyl-5-(diphosphooxymethyl)pyrimidine + 2 H(+) = thiamine phosphate + CO2 + diphosphate. The enzyme catalyses 4-methyl-5-(2-phosphooxyethyl)-thiazole + 4-amino-2-methyl-5-(diphosphooxymethyl)pyrimidine + H(+) = thiamine phosphate + diphosphate. It functions in the pathway cofactor biosynthesis; thiamine diphosphate biosynthesis; thiamine phosphate from 4-amino-2-methyl-5-diphosphomethylpyrimidine and 4-methyl-5-(2-phosphoethyl)-thiazole: step 1/1. In terms of biological role, condenses 4-methyl-5-(beta-hydroxyethyl)thiazole monophosphate (THZ-P) and 2-methyl-4-amino-5-hydroxymethyl pyrimidine pyrophosphate (HMP-PP) to form thiamine monophosphate (TMP). The sequence is that of Thiamine-phosphate synthase from Thiobacillus denitrificans (strain ATCC 25259 / T1).